Reading from the N-terminus, the 176-residue chain is 3-hydroxydecanoyl-[acyl-carrier-protein] dehydratase (176 aa).

Histidine 71 is an active-site residue.

It belongs to the thioester dehydratase family. FabA subfamily. As to quaternary structure, homodimer.

The protein resides in the cytoplasm. The enzyme catalyses a (3R)-hydroxyacyl-[ACP] = a (2E)-enoyl-[ACP] + H2O. It carries out the reaction (3R)-hydroxydecanoyl-[ACP] = (2E)-decenoyl-[ACP] + H2O. It catalyses the reaction (2E)-decenoyl-[ACP] = (3Z)-decenoyl-[ACP]. The protein operates within lipid metabolism; fatty acid biosynthesis. Functionally, necessary for the introduction of cis unsaturation into fatty acids. Catalyzes the dehydration of (3R)-3-hydroxydecanoyl-ACP to E-(2)-decenoyl-ACP and then its isomerization to Z-(3)-decenoyl-ACP. Can catalyze the dehydratase reaction for beta-hydroxyacyl-ACPs with saturated chain lengths up to 16:0, being most active on intermediate chain length. This chain is 3-hydroxydecanoyl-[acyl-carrier-protein] dehydratase, found in Rhodopseudomonas palustris (strain HaA2).